We begin with the raw amino-acid sequence, 351 residues long: Short-chain dehydrogenase sdnK (351 aa).

The NADP(+) site is built by isoleucine 46, threonine 66, glutamate 98, tyrosine 224, lysine 228, and threonine 268. The active-site Proton donor is tyrosine 224. Lysine 228 functions as the Lowers pKa of active site Tyr in the catalytic mechanism.

This sequence belongs to the short-chain dehydrogenases/reductases (SDR) family.

Its pathway is antibiotic biosynthesis. Functionally, short-chain dehydrogenase; part of the gene cluster that mediates the biosynthesis of sordarin and hypoxysordarin, glycoside antibiotics with a unique tetracyclic diterpene aglycone structure. First, the geranylgeranyl diphosphate synthase sdnC constructs GGDP from farnesyl diphosphate and isopentenyl diphosphate. The diterpene cyclase sdnA then catalyzes the cyclization of GGDP to afford cycloaraneosene. Cycloaraneosene is then hydroxylated four times by the putative cytochrome P450 monooxygenases sdnB, sdnE, sdnF and sdnH to give a hydroxylated cycloaraneosene derivative such as cycloaraneosene-8,9,13,19-tetraol. Although the order of the hydroxylations is unclear, at least C8, C9 and C13 of the cycloaraneosene skeleton are hydroxylated before the sordaricin formation. Dehydration of the 13-hydroxy group of the hydroxylated cycloaraneosene derivative might be catalyzed by an unassigned hypothetical protein such as sdnG and sdnP to construct the cyclopentadiene moiety. The FAD-dependent oxidoreductase sdnN is proposed to catalyze the oxidation at C9 of the hydroxylated cycloaraneosene derivative and also catalyze the Baeyer-Villiger oxidation to give the lactone intermediate. The presumed lactone intermediate would be hydrolyzed to give an acrolein moiety and a carboxylate moiety. Then, [4+2]cycloaddition would occur between the acrolein moiety and the cyclopentadiene moiety to give sordaricin. SdnN might also be involved in the [4+2]cycloaddition after the hypothesized oxidation to accommodate the oxidized product and prompt the [4+2]cycloaddition. GDP-6-deoxy-D-altrose may be biosynthesized from GDP-D-mannose by the putative GDP-mannose-4,6-dehydratase sdnI and the short-chain dehydrogenase sdnK. The glycosyltransferase sdnJ catalyzes the attachment of 6-deoxy-D-altrose onto the 19-hydroxy group of sordaricin to give 4'-O-demethylsordarin. The methyltransferase sdnD would complete the biosynthesis of sordarin. Sordarin can be further modified into hypoxysordarin. The unique acyl chain at the 3'-hydroxy group of hypoxysordarin would be constructed by an iterative type I PKS sdnO and the trans-acting polyketide methyltransferase sdnL. SdnL would be responsible for the introduction of an alpha-methyl group of the polyketide chain. Alternatively, the beta-lactamase-like protein sdnR might be responsible for the cleavage and transfer of the polyketide chain from the PKS sdnO to sordarin. Two putative cytochrome P450 monooxygenases, sdnQ and sdnT, might catalyze the epoxidations of the polyketide chain to complete the biosynthesis of hypoxysordarin. Transcriptional regulators sdnM and sdnS are presumably encoded for the transcriptional regulation of the expression of the sdn gene cluster. This is Short-chain dehydrogenase sdnK from Sordaria araneosa (Pleurage araneosa).